We begin with the raw amino-acid sequence, 164 residues long: DNA-directed RNA polymerase 19 kDa subunit (164 aa).

Positions 1-35 (MADTDDIIDYESDDLTEYEDDDEEEEDGESLETSD) are enriched in acidic residues. The disordered stretch occupies residues 1–39 (MADTDDIIDYESDDLTEYEDDDEEEEDGESLETSDIDPK).

It belongs to the poxviridae DNA-directed RNA polymerase 19 kDa subunit family. As to quaternary structure, the DNA-dependent RNA polymerase used for intermediate and late genes expression consists of eight subunits Rpo30/OPG66, Rpo7/OPG90, Rpo22/OPG103, Rpo147/OPG105, Rpo18/OPG119, Rpo19/OPG131, Rpo132/OPG151 and Rpo35/OPG156. The same holoenzyme, with the addition of the transcription-specificity factor OPG109, is used for early gene expression.

It is found in the virion. It catalyses the reaction RNA(n) + a ribonucleoside 5'-triphosphate = RNA(n+1) + diphosphate. Functionally, part of the DNA-dependent RNA polymerase which catalyzes the transcription of viral DNA into RNA using the four ribonucleoside triphosphates as substrates. Responsible for the transcription of early, intermediate and late genes. DNA-dependent RNA polymerase associates with the early transcription factor (ETF), itself composed of OPG118 and OPG133, thereby allowing the early genes transcription. Late transcription, and probably also intermediate transcription, require newly synthesized RNA polymerase. This chain is DNA-directed RNA polymerase 19 kDa subunit (OPG131), found in Variola virus (isolate Human/India/Ind3/1967) (VARV).